We begin with the raw amino-acid sequence, 212 residues long: Ribosomal RNA small subunit methyltransferase G (212 aa).

S-adenosyl-L-methionine is bound by residues Gly-80, Leu-85, 131-132, and Arg-146; that span reads AE.

The protein belongs to the methyltransferase superfamily. RNA methyltransferase RsmG family.

The protein resides in the cytoplasm. It catalyses the reaction guanosine(527) in 16S rRNA + S-adenosyl-L-methionine = N(7)-methylguanosine(527) in 16S rRNA + S-adenosyl-L-homocysteine. In terms of biological role, specifically methylates the N7 position of guanine in position 527 of 16S rRNA. This Xanthomonas campestris pv. campestris (strain B100) protein is Ribosomal RNA small subunit methyltransferase G.